The following is a 689-amino-acid chain: DNA ligase (689 aa).

NAD(+)-binding positions include 40–44 (DAEYD), 89–90 (SL), and E121. Residue K123 is the N6-AMP-lysine intermediate of the active site. NAD(+) contacts are provided by R144, E179, K295, and K319. Zn(2+) contacts are provided by C413, C416, C431, and C437. One can recognise a BRCT domain in the interval 610 to 689 (RAQSSLTGKI…EEWLTLIKNA (80 aa)).

Belongs to the NAD-dependent DNA ligase family. LigA subfamily. It depends on Mg(2+) as a cofactor. Mn(2+) serves as cofactor.

It catalyses the reaction NAD(+) + (deoxyribonucleotide)n-3'-hydroxyl + 5'-phospho-(deoxyribonucleotide)m = (deoxyribonucleotide)n+m + AMP + beta-nicotinamide D-nucleotide.. Its function is as follows. DNA ligase that catalyzes the formation of phosphodiester linkages between 5'-phosphoryl and 3'-hydroxyl groups in double-stranded DNA using NAD as a coenzyme and as the energy source for the reaction. It is essential for DNA replication and repair of damaged DNA. The sequence is that of DNA ligase from Rickettsia akari (strain Hartford).